Reading from the N-terminus, the 407-residue chain is 1-deoxy-D-xylulose 5-phosphate reductoisomerase (407 aa).

Positions 10, 11, 12, 13, 36, and 131 each coordinate NADPH. K132 contacts 1-deoxy-D-xylulose 5-phosphate. E133 is a binding site for NADPH. D155 serves as a coordination point for Mn(2+). 1-deoxy-D-xylulose 5-phosphate-binding residues include S156, E157, S181, and H204. E157 contributes to the Mn(2+) binding site. Position 210 (G210) interacts with NADPH. 4 residues coordinate 1-deoxy-D-xylulose 5-phosphate: S217, N222, K223, and E226. Position 226 (E226) interacts with Mn(2+).

The protein belongs to the DXR family. The cofactor is Mg(2+). It depends on Mn(2+) as a cofactor.

It catalyses the reaction 2-C-methyl-D-erythritol 4-phosphate + NADP(+) = 1-deoxy-D-xylulose 5-phosphate + NADPH + H(+). Its pathway is isoprenoid biosynthesis; isopentenyl diphosphate biosynthesis via DXP pathway; isopentenyl diphosphate from 1-deoxy-D-xylulose 5-phosphate: step 1/6. Its function is as follows. Catalyzes the NADPH-dependent rearrangement and reduction of 1-deoxy-D-xylulose-5-phosphate (DXP) to 2-C-methyl-D-erythritol 4-phosphate (MEP). The protein is 1-deoxy-D-xylulose 5-phosphate reductoisomerase of Cutibacterium acnes (strain DSM 16379 / KPA171202) (Propionibacterium acnes).